The sequence spans 482 residues: Probable 2-carboxy-D-arabinitol-1-phosphatase (482 aa).

The transit peptide at 1–34 (MISLPLTTPILPSRCLLHKTRRQNSTRRRLLIRS) directs the protein to the chloroplast. His55 functions as the Tele-phosphohistidine intermediate in the catalytic mechanism. Residue Glu129 is the Proton donor/acceptor of the active site.

Belongs to the phosphoglycerate mutase family.

It localises to the plastid. Its subcellular location is the chloroplast stroma. The enzyme catalyses 2-carboxy-D-arabinitol 1-phosphate + H2O = 2-carboxy-D-arabinitol + phosphate. Phosphoglycerate mutase-like protein lacking PGM activity, but having 2-carboxy-D-arabinitol 1-phosphate (CA1P) phosphatase activity. Prevents the accumulation of D-glycero-2,3-pentodiulose-1,5-bisphosphate (PDBP) a potent inhibitor of ribulose-1,5-bisphosphate carboxylase (RuBisCO). PDBP is produced during the oxidation of ribulose-1,5-bisphosphate, the substrate of RuBisCO. The chain is Probable 2-carboxy-D-arabinitol-1-phosphatase from Arabidopsis thaliana (Mouse-ear cress).